The sequence spans 330 residues: Ribose operon repressor (330 aa).

Residues 2–56 form the HTH lacI-type domain; that stretch reads ATMKDVARLAGVSTSTVSHVINKDRFVSEAITAKVEAAIKELNYAPSALARSLKL. A DNA-binding region (H-T-H motif) is located at residues 4–23; the sequence is MKDVARLAGVSTSTVSHVIN.

Functionally, transcriptional repressor for the ribose rbsDACBK operon. RbsR binds to a region of perfect dyad symmetry spanning the rbs operon transcriptional start site. The affinity for the rbs operator is reduced by addition of ribose, consistent with ribose being the inducer of the operon. This Escherichia coli O6:H1 (strain CFT073 / ATCC 700928 / UPEC) protein is Ribose operon repressor (rbsR).